The primary structure comprises 213 residues: Vacuolar protein sorting-associated protein 32 homolog 1 (213 aa).

Coiled coils occupy residues 11-42 and 118-176; these read KQET…KKAT and TNID…QLLQ. Positions 180 to 213 are disordered; sequence IHVPQGNKPARAPAQKQPTAEEDELAALQAEMAL.

It belongs to the SNF7 family. As to quaternary structure, component of the endosomal sorting required for transport complex III (ESCRT-III), composed at least of VPS2, VPS20, VPS24 and VPS32. Interacts with SKD1. Interacts with BRO1/ALIX.

The protein resides in the endosome. In terms of biological role, component of the ESCRT-III complex, which is required for multivesicular bodies (MVBs) formation and sorting of endosomal cargo proteins into MVBs. The ESCRT-III complex is probably involved in the concentration of MVB cargo. The chain is Vacuolar protein sorting-associated protein 32 homolog 1 (VPS32.1) from Arabidopsis thaliana (Mouse-ear cress).